The primary structure comprises 376 residues: Methionine import ATP-binding protein MetN 1 (376 aa).

An ABC transporter domain is found at 34-273 (VRFINLGKTY…PQHEVSKTLL (240 aa)). Position 70–77 (70–77 (GRSGAGKS)) interacts with ATP.

The protein belongs to the ABC transporter superfamily. Methionine importer (TC 3.A.1.24) family. The complex is composed of two ATP-binding proteins (MetN), two transmembrane proteins (MetI) and a solute-binding protein (MetQ).

Its subcellular location is the cell inner membrane. It catalyses the reaction L-methionine(out) + ATP + H2O = L-methionine(in) + ADP + phosphate + H(+). It carries out the reaction D-methionine(out) + ATP + H2O = D-methionine(in) + ADP + phosphate + H(+). In terms of biological role, part of the ABC transporter complex MetNIQ involved in methionine import. Responsible for energy coupling to the transport system. The chain is Methionine import ATP-binding protein MetN 1 from Pseudomonas syringae pv. tomato (strain ATCC BAA-871 / DC3000).